Reading from the N-terminus, the 177-residue chain is Interleukin-19 (177 aa).

The N-terminal stretch at 1–24 (MKLQCVSLWLLGTILILCSVDNHG) is a signal peptide. 3 disulfides stabilise this stretch: Cys28/Cys121, Cys75/Cys127, and Cys76/Cys129. N-linked (GlcNAc...) asparagine glycosylation is present at Asn56. N-linked (GlcNAc...) asparagine glycosylation occurs at Asn135.

Belongs to the IL-10 family.

The protein resides in the secreted. In terms of biological role, cytokine that functions as an anti-inflammatory and proangiogenic factor. Polarizes adaptive immunity to an anti-inflammatory phenotype through induction of T-helper 2 responses by both down-regulation of IFN-gamma and up-regulation of IL4 and IL13. Produced by osteocytes, stimulates granulopoiesis and neutrophil formation. Exerts its biological effect through a receptor complex consisting of a heterodimer of IL20RA and IL20RB. In turn, activates the Janus kinase (JAK) and signal transducer and activator of transcription (STAT) pathway, and importantly, STAT3. The polypeptide is Interleukin-19 (IL19) (Homo sapiens (Human)).